Here is a 455-residue protein sequence, read N- to C-terminus: Phosphoglucosamine mutase (455 aa).

Serine 102 serves as the catalytic Phosphoserine intermediate. Residues serine 102, aspartate 241, aspartate 243, and aspartate 245 each coordinate Mg(2+). A Phosphoserine modification is found at serine 102.

Belongs to the phosphohexose mutase family. Mg(2+) serves as cofactor. In terms of processing, activated by phosphorylation.

It carries out the reaction alpha-D-glucosamine 1-phosphate = D-glucosamine 6-phosphate. Functionally, catalyzes the conversion of glucosamine-6-phosphate to glucosamine-1-phosphate. The chain is Phosphoglucosamine mutase from Legionella pneumophila (strain Lens).